Here is a 508-residue protein sequence, read N- to C-terminus: Glutamyl-tRNA(Gln) amidotransferase subunit B, mitochondrial (508 aa).

Belongs to the GatB/GatE family. GatB subfamily. Subunit of the heterotrimeric GatFAB amidotransferase (AdT) complex, composed of A, B and F subunits.

It localises to the mitochondrion. The enzyme catalyses L-glutamyl-tRNA(Gln) + L-glutamine + ATP + H2O = L-glutaminyl-tRNA(Gln) + L-glutamate + ADP + phosphate + H(+). Its function is as follows. Allows the formation of correctly charged Gln-tRNA(Gln) through the transamidation of misacylated Glu-tRNA(Gln) in the mitochondria. The reaction takes place in the presence of glutamine and ATP through an activated gamma-phospho-Glu-tRNA(Gln). This Scheffersomyces stipitis (strain ATCC 58785 / CBS 6054 / NBRC 10063 / NRRL Y-11545) (Yeast) protein is Glutamyl-tRNA(Gln) amidotransferase subunit B, mitochondrial.